We begin with the raw amino-acid sequence, 66 residues long: Vesicular acetylcholine transporter (66 aa).

A helical membrane pass occupies residues 1-15 (GMGLANLLYAPVLLL). The Cytoplasmic segment spans residues 16 to 66 (LRNVGLLTRSRSERDVLLDEPPQGLYDAVRLRERPVSGQDGEPRSPPGPFD). A disordered region spans residues 43-66 (AVRLRERPVSGQDGEPRSPPGPFD).

Belongs to the major facilitator superfamily. Vesicular transporter family. As to quaternary structure, interacts with SEC14L1.

The protein resides in the cytoplasmic vesicle. Its subcellular location is the secretory vesicle. It is found in the synaptic vesicle membrane. The enzyme catalyses acetylcholine(out) + 2 H(+)(in) = acetylcholine(in) + 2 H(+)(out). It catalyses the reaction choline(in) + 2 H(+)(out) = choline(out) + 2 H(+)(in). It carries out the reaction serotonin(in) + 2 H(+)(out) = serotonin(out) + 2 H(+)(in). Its function is as follows. Electrogenic antiporter that exchanges one cholinergic neurotransmitter, acetylcholine or choline, with two intravesicular protons across the membrane of synaptic vesicles. Uses the electrochemical proton gradient established by the V-type proton-pump ATPase to store neurotransmitters inside the vesicles prior to their release via exocytosis. Determines cholinergic vesicular quantal size at presynaptic nerve terminals in developing neuro-muscular junctions with an impact on motor neuron differentiation and innervation pattern. Part of forebrain cholinergic system, regulates hippocampal synapse transmissions that underlie spatial memory formation. Can transport serotonin. The protein is Vesicular acetylcholine transporter (SLC18A3) of Macaca fuscata fuscata (Japanese macaque).